The following is a 224-amino-acid chain: 4'-phosphopantetheinyl transferase (224 aa).

Aspartate 107, glutamate 109, and glutamate 151 together coordinate Mg(2+). The interval 158 to 189 (GKGLSLPLDSFSVRLKDDGHVSIELPDGHEPC) is peptidyl carrier protein binding.

Belongs to the P-Pant transferase superfamily. Gsp/Sfp/HetI/AcpT family. It depends on Mg(2+) as a cofactor.

The catalysed reaction is apo-[peptidyl-carrier protein] + CoA = holo-[peptidyl-carrier protein] + adenosine 3',5'-bisphosphate + H(+). Its function is as follows. May activate the peptidyl carrier protein (PCP) domains of surfactin synthetase SRF1/2/3 and iturin A synthetase, by transferring the 4'-phosphopantetheinyl moiety of coenzyme A (CoA) to a serine residue. Required for the coproduction of the lipopeptide antibiotics, iturin A and surfactin. The chain is 4'-phosphopantetheinyl transferase (lpa-14) from Bacillus subtilis.